We begin with the raw amino-acid sequence, 910 residues long: Schlafen family member 8 (910 aa).

Residues 1–354 form a n'-domain region region; sequence METHPSLAVK…WVRMMVDFGP (354 aa). Active-site residues include E205 and E210. Zn(2+) contacts are provided by H280, C282, and C319. 599–606 contacts ATP; sequence GLPGSGKT.

It belongs to the Schlafen family. Subgroup III subfamily. The cofactor is Mg(2+). In T-cells, expressed at relatively constant levels during development: expressed in immature CD3(-)CD4(-)CD8(-) T-cells (DN stage), in CD4(+)CD8(+) double-positive stage (DP) and mature CD4(+) or CD8(+) thymocytes. Expression is slightly reduced at the DP stage.

The protein resides in the cytoplasm. In terms of biological role, endoribonuclease that cleaves tRNAs and rRNAs. Cleaves tRNAs 11 nucleotides from the 3'-terminus at the acceptor stem. May be involved in immune system via regulation of inflammation. The protein is Schlafen family member 8 of Mus musculus (Mouse).